A 66-amino-acid polypeptide reads, in one-letter code: MKLSALSIIFGMILVMTIMYTKAEAEAEAEADADADAKAEAEAFWGTLAKWALKAIPAAMGMKQNK.

A signal peptide spans Met1 to Ala23. A propeptide spanning residues Glu24 to Ala43 is cleaved from the precursor.

The protein belongs to the non-disulfide-bridged peptide (NDBP) superfamily. Medium-length antimicrobial peptide (group 3) family. Ponericin-W subfamily. Expressed by the venom gland.

It localises to the secreted. It is found in the target cell membrane. In terms of biological role, may have antimicrobial properties by disrupting the integrity of the bacterial cell membrane. In addition, when tested in vitro on the parasite Trypanosoma cruzi (responsible of the Chagas disease), is able to potently reduce the number of the three forms (epimastigote, trypomastigote and amastigote) by inducing cell death through necrosis. Its function is as follows. May have antimicrobial properties by disrupting the integrity of the bacterial cell membrane. In addition, when tested in vitro on the parasite Trypanosoma cruzi (responsible of the Chagas disease), is able to moderately reduce the number of the forms epimastigote and trypomastigote. Its activity on the amastigote form has not been tested. May have antimicrobial properties by disrupting the integrity of the bacterial cell membrane. In addition, when tested in vitro on the parasite Trypanosoma cruzi (responsible of the Chagas disease), shows only a weak reduction of the number of the trypomastigote forms. Has no activity on the epimastigote forms. Its activity on the amastigote form has not been tested. The sequence is that of M-poneratoxin-Dq3a from Dinoponera quadriceps (South American ant).